The following is a 280-amino-acid chain: ESX-1 secretion-associated protein EspJ (280 aa).

A Phosphoserine modification is found at S70. 2 stretches are compositionally biased toward low complexity: residues 167–181 and 246–280; these read QTIS…QSAQ and PAQA…TTTL. The interval 167–280 is disordered; that stretch reads QTISQTAQQA…TPAPSTTTTL (114 aa).

In terms of processing, phosphorylated at Ser-70.

Its subcellular location is the secreted. In terms of biological role, could be involved in regulation of growth and intracellular survival. The sequence is that of ESX-1 secretion-associated protein EspJ from Mycobacterium tuberculosis (strain CDC 1551 / Oshkosh).